Reading from the N-terminus, the 128-residue chain is uncharacterized protein (128 aa).

The next 4 membrane-spanning stretches (helical) occupy residues 2–22 (LPFY…LTVL), 34–54 (FLYD…AAVC), 64–84 (LPVL…ALFL), and 108–128 (LGLF…TLFL).

It is found in the cell membrane. This is an uncharacterized protein from Treponema pallidum (strain Nichols).